Here is a 61-residue protein sequence, read N- to C-terminus: Large ribosomal subunit protein uL30 (61 aa).

Belongs to the universal ribosomal protein uL30 family. As to quaternary structure, part of the 50S ribosomal subunit.

The chain is Large ribosomal subunit protein uL30 from Corynebacterium efficiens (strain DSM 44549 / YS-314 / AJ 12310 / JCM 11189 / NBRC 100395).